Consider the following 175-residue polypeptide: NADH-ubiquinone oxidoreductase chain 6 (175 aa).

5 consecutive transmembrane segments (helical) span residues M1–S21, S25–L45, G48–F68, T88–I108, and Y149–M169.

Belongs to the complex I subunit 6 family. In terms of assembly, core subunit of respiratory chain NADH dehydrogenase (Complex I) which is composed of 45 different subunits.

It is found in the mitochondrion inner membrane. The enzyme catalyses a ubiquinone + NADH + 5 H(+)(in) = a ubiquinol + NAD(+) + 4 H(+)(out). Functionally, core subunit of the mitochondrial membrane respiratory chain NADH dehydrogenase (Complex I) which catalyzes electron transfer from NADH through the respiratory chain, using ubiquinone as an electron acceptor. Essential for the catalytic activity and assembly of complex I. The sequence is that of NADH-ubiquinone oxidoreductase chain 6 (MT-ND6) from Urotrichus talpoides (Japanese shrew mole).